The following is a 298-amino-acid chain: Mitochondrial dicarboxylate transporter (298 aa).

Solcar repeat units follow at residues 11-95, 103-195, and 205-289; these read KNIK…LKEN, TNMA…FKNY, and SKNY…LKKH. 6 helical membrane passes run 17-37, 58-76, 105-126, 170-189, 211-231, and 265-283; these read WWYGGAAGIFATMVTHPLDLA, ILANEGVVGLYSGLSAAVL, MAYLLPCSMFSGAIGGLAGNFA, GWKPNMVRGILMTASQVVTY, LTASLLAGLVATTVCSPADVM, and WLPSFTRLGPFTMLIFFAI.

It belongs to the mitochondrial carrier (TC 2.A.29) family. In terms of assembly, homodimer. Binds to the TIM22 translocation complex during import.

Its subcellular location is the mitochondrion inner membrane. Functionally, mitochondrial dicarboxylic transporter catalyzing the exchange of dicarboxylic acids like malate and succinate for inorganic phosphate. Required for growth on ethanol and acetate. This chain is Mitochondrial dicarboxylate transporter (DIC1), found in Saccharomyces cerevisiae (strain ATCC 204508 / S288c) (Baker's yeast).